The following is a 454-amino-acid chain: Sensor histidine kinase RppB (454 aa).

Residues 1-13 (MNTRRLFARSRLQ) lie on the Periplasmic side of the membrane. Residues 14-34 (LAFWYALVMGGILTLLGLGVY) traverse the membrane as a helical segment. At 35-186 (RAIVQANWMA…LAAFDAENKR (152 aa)) the chain is on the cytoplasmic side. A helical transmembrane segment spans residues 187–207 (ILWILGLSFPIALGLVAFSSW). Residues 208–454 (GLAGLAMRPI…PIFSVPIVHS (247 aa)) are Periplasmic-facing. The 219-residue stretch at 230 to 448 (NAAHELRSPL…LFTIQLPIFS (219 aa)) folds into the Histidine kinase domain. His-233 is modified (phosphohistidine; by autocatalysis).

Its subcellular location is the cell inner membrane. The catalysed reaction is ATP + protein L-histidine = ADP + protein N-phospho-L-histidine.. Its function is as follows. Member of two-component regulatory system RppA/RppB, involved in the establishment of the appropriate stoichiometry between the 2 photosystems. It senses changes in the plastoquinone (PQ) redox poise. Another group shows this two-component pair, renamed NrsR/NrsS, controls the nickel-dependent expression of the nrsBACD operon; they suggest the photosystem-related activities seen earlier are due to the expression of NrsS (RppB) in the absence of its natural substrate NrsR (RppA). The polypeptide is Sensor histidine kinase RppB (Synechocystis sp. (strain ATCC 27184 / PCC 6803 / Kazusa)).